A 181-amino-acid polypeptide reads, in one-letter code: MKHTLSVLVEDESGVLTRISGLFARRGFNIDSLAVGPAEKAGISRITMVIRGDNRIIEQITKHLYKLVNVLKIQDITNIPCVERELMLIKVKTGENKRNEILEIANIFRARVVDLSESFIILEITGDPGKIAAIEKLLEKYGICEIARTGKIALTRESKINTEILRLNTMINNDKIRGGGT.

Positions 4–78 (TLSVLVEDES…NVLKIQDITN (75 aa)) constitute an ACT domain.

This sequence belongs to the acetolactate synthase small subunit family. In terms of assembly, dimer of large and small chains.

Its subcellular location is the plastid. It localises to the chloroplast. It carries out the reaction 2 pyruvate + H(+) = (2S)-2-acetolactate + CO2. It functions in the pathway amino-acid biosynthesis; L-isoleucine biosynthesis; L-isoleucine from 2-oxobutanoate: step 1/4. It participates in amino-acid biosynthesis; L-valine biosynthesis; L-valine from pyruvate: step 1/4. The chain is Acetolactate synthase small subunit (ilvH) from Galdieria sulphuraria (Red alga).